Here is a 69-residue protein sequence, read N- to C-terminus: uncharacterized protein (69 aa).

The HTH cro/C1-type domain occupies 10–64; the sequence is IRAFRKLKGYTQEGFAKALGISVSILGEIERGNRLPSAAIIQDAADVLNISADEL. A DNA-binding region (H-T-H motif) is located at residues 21–40; it reads QEGFAKALGISVSILGEIER.

This is an uncharacterized protein from Bacillus subtilis (strain 168).